We begin with the raw amino-acid sequence, 204 residues long: Paraneoplastic antigen-like protein 8C (204 aa).

The interval 135-204 (PPATGPRELP…RRHHASDKKL (70 aa)) is disordered. The segment covering 182-204 (VGKRGKRKNKKNRRRHHASDKKL) has biased composition (basic residues).

The protein belongs to the PNMA family.

The protein is Paraneoplastic antigen-like protein 8C of Homo sapiens (Human).